Consider the following 433-residue polypeptide: Dihydrolipoyllysine-residue acetyltransferase component of pyruvate dehydrogenase complex (433 aa).

The Lipoyl-binding domain maps to 2–77 (AFEFRLPDIG…VVGDVIVKID (76 aa)). Residue lysine 43 is modified to N6-lipoyllysine. Disordered stretches follow at residues 80-134 (DAEE…PSVR) and 164-204 (YLNG…FPET). 2 stretches are compositionally biased toward basic and acidic residues: residues 84–103 (MQFK…KEQE) and 117–126 (EKTEVDESKT). One can recognise a Peripheral subunit-binding (PSBD) domain in the interval 128 to 165 (KAMPSVRKYARENGVNIKAVNGSGKNGRITKEDIDAYL). Residues 166 to 185 (NGGSSEEGSNTSAASESTSS) are compositionally biased toward low complexity. The active site involves histidine 404.

The protein belongs to the 2-oxoacid dehydrogenase family. Forms a 24-polypeptide structural core with octahedral symmetry. (R)-lipoate is required as a cofactor.

The catalysed reaction is N(6)-[(R)-dihydrolipoyl]-L-lysyl-[protein] + acetyl-CoA = N(6)-[(R)-S(8)-acetyldihydrolipoyl]-L-lysyl-[protein] + CoA. The pyruvate dehydrogenase complex catalyzes the overall conversion of pyruvate to acetyl-CoA and CO(2). It contains multiple copies of three enzymatic components: pyruvate dehydrogenase (E1), dihydrolipoamide acetyltransferase (E2) and lipoamide dehydrogenase (E3). This Staphylococcus epidermidis (strain ATCC 35984 / DSM 28319 / BCRC 17069 / CCUG 31568 / BM 3577 / RP62A) protein is Dihydrolipoyllysine-residue acetyltransferase component of pyruvate dehydrogenase complex (pdhC).